The following is a 1172-amino-acid chain: MYEYYSTGKIRSLPQQVDSNGINSKPMNSSPSTPIPNNNNNNNNNNNNNNNNNNNNNNNNNNNRNKSQQSFYLNNNNRNCGFSSPTKPQYNNNNNNNNNNNSNYNHSYGGGGGGTTSQFQQHHLHPVNRKPPKFKISYSVKNTLNNTIIPDRHCFGVNSLAYNHRKSILYSAGRDSTIKSYQIGGGDNDNDINEKNEYGFKFKKSFNDHTDWVNDLFFNDSNILVSCSSDSTIKIWNTDSERCVNSLKFHDDYVKVLAYAPKANYFASSGLDSHIKIWDLSICSISQSFSIDNNNNNNHNSSSNYNQFGDTSILKHITNNSQPTNKINNCNINVVNGNINISTNNNNNNSSSSNNNNNNNNNNNNGQTNTHENTAETSDSEGSKDDNQLSSVNKNGIRSNLSNNNFRNIDNIDEYTPPSSVLNHTPKILSSNGRNVNNRENNNNNNNNNNNNNNNNNNNNNNNNNNNNNNNNNINNNNHENNGNVDVDDEDDDDDDDDDDDDDCNKNKKKYDDNNNNNNYNNNNNKKNNSNDNNNDNNNLNKKFSPMFGSGSYLVGKSGGEGISIYSLAIAQDASFVVSGSTERAIRGWDVRSGQKIFKLKGHTDNIRSILLNDNSTRCLSASSDGTVRLWDIGEQRCIQVFDDLHTDSVWTLATNDSFSHFFSGGRDGMIFLTDLKTHQSRLVSRENEPILKILNNQDDQSIWVSTTSSTIKNYGLSNFYDKNQSIDNNTTNCGSISSEILYNNNNNNNNNNNNNNNNNNNNNNNNNNNREKLSTINEDSNGLQVDEPKIKIQGRAGIIKNQVLNNRRQVLTKDNDNNVQLWDITKGKEIESFGKVDFDKKLEEFNEVISIPKWFQVDCKTGSLFISLESPLCFSADAYQTNLGLTPTEDSLINIGESILYSLFSKWIMGYNLIQLNATTNKDNELNHSNDSVNSSLSSNTSGDNNNNNYNNYNNYNNNNNNGLQKSSSSSSIVSTNSTTPNSGRPLIEIMAKKSIFHLPSNTDVVISDETSGLVLYRSRIEEFTGREQIKIIDWLYNCLETSAIPIKRDNQKISFSVEVNEKIPQNLNAPYYIQVRKICDHVLNNFFINPNNNNNNNSSVNNDLPKGEEFFEICLQNKILLPHYTLGTVKSFFWKQNSTIPLTARVKAQYINETELVKYLKQLSLNHNKK.

Positions 1–115 (MYEYYSTGKI…HSYGGGGGGT (115 aa)) are disordered. Residues 13–36 (LPQQVDSNGINSKPMNSSPSTPIP) are compositionally biased toward polar residues. The segment covering 37–63 (NNNNNNNNNNNNNNNNNNNNNNNNNNN) has biased composition (low complexity). Residues 64–89 (RNKSQQSFYLNNNNRNCGFSSPTKPQ) show a composition bias toward polar residues. Over residues 90 to 107 (YNNNNNNNNNNNSNYNHS) the composition is skewed to low complexity. 7 WD repeats span residues 152 to 202 (RHCF…GFKF), 208 to 246 (DHTDWVNDLFFNDSNILVSCSSDSTIKIWNTDSERCVNS), 249 to 548 (FHDD…SPMF), 560 to 599 (GEGISIYSLAIAQDASFVVSGSTERAIRGWDVRSGQKIFK), 602 to 641 (GHTDNIRSILLNDNSTRCLSASSDGTVRLWDIGEQRCIQV), 645 to 683 (LHTDSVWTLATNDSFSHFFSGGRDGMIFLTDLKTHQSRL), and 686 to 727 (RENE…NQSI). A compositionally biased stretch (low complexity) spans 341 to 365 (ISTNNNNNNSSSSNNNNNNNNNNNN). The interval 341-544 (ISTNNNNNNS…NDNNNLNKKF (204 aa)) is disordered. Composition is skewed to polar residues over residues 366–377 (GQTNTHENTAET), 388–408 (QLSSVNKNGIRSNLSNNNFRN), and 417–434 (PPSSVLNHTPKILSSNGR). Positions 435–485 (NVNNRENNNNNNNNNNNNNNNNNNNNNNNNNNNNNNNNNINNNNHENNGNV) are enriched in low complexity. The span at 486-503 (DVDDEDDDDDDDDDDDDD) shows a compositional bias: acidic residues. Residues 504–513 (CNKNKKKYDD) are compositionally biased toward basic and acidic residues. Residues 514-543 (NNNNNNYNNNNNKKNNSNDNNNDNNNLNKK) show a composition bias toward low complexity. The segment covering 745-769 (NNNNNNNNNNNNNNNNNNNNNNNNN) has biased composition (low complexity). A disordered region spans residues 745–775 (NNNNNNNNNNNNNNNNNNNNNNNNNNREKLS). Residues 794-833 (QGRAGIIKNQVLNNRRQVLTKDNDNNVQLWDITKGKEIES) form a WD 8 repeat. A disordered region spans residues 926-986 (ELNHSNDSVN…TNSTTPNSGR (61 aa)). The span at 930–984 (SNDSVNSSLSSNTSGDNNNNNYNNYNNYNNNNNNGLQKSSSSSSIVSTNSTTPNS) shows a compositional bias: low complexity.

Belongs to the WD repeat WDR48 family.

This is WD repeat-containing protein 48 homolog from Dictyostelium discoideum (Social amoeba).